The following is a 533-amino-acid chain: Probable bifunctional tRNA threonylcarbamoyladenosine biosynthesis protein (533 aa).

The tract at residues 1–328 (MRILGIEGTA…FRPDAVTVTW (328 aa)) is kae1. Positions 112 and 116 each coordinate Fe cation. L-threonylcarbamoyladenylate contacts are provided by residues 133–137 (NASGA), D165, G178, E182, and N261. Fe cation is bound at residue D289. The Protein kinase domain maps to 339 to 533 (PATLDKTPVR…RDIESRGRYH (195 aa)). ATP-binding positions include 347 to 354 (VRGAEAIV) and K363. D452 (proton acceptor; for kinase activity) is an active-site residue.

In the N-terminal section; belongs to the KAE1 / TsaD family. This sequence in the C-terminal section; belongs to the protein kinase superfamily. Tyr protein kinase family. BUD32 subfamily. In terms of assembly, component of the KEOPS complex that consists of Kae1, Bud32, Cgi121 and Pcc1; the whole complex dimerizes. Fe(2+) is required as a cofactor.

It localises to the cytoplasm. The catalysed reaction is L-seryl-[protein] + ATP = O-phospho-L-seryl-[protein] + ADP + H(+). It catalyses the reaction L-threonyl-[protein] + ATP = O-phospho-L-threonyl-[protein] + ADP + H(+). The enzyme catalyses L-threonylcarbamoyladenylate + adenosine(37) in tRNA = N(6)-L-threonylcarbamoyladenosine(37) in tRNA + AMP + H(+). In terms of biological role, required for the formation of a threonylcarbamoyl group on adenosine at position 37 (t(6)A37) in tRNAs that read codons beginning with adenine. Is a component of the KEOPS complex that is probably involved in the transfer of the threonylcarbamoyl moiety of threonylcarbamoyl-AMP (TC-AMP) to the N6 group of A37. The Kae1 domain likely plays a direct catalytic role in this reaction. The Bud32 domain probably displays kinase activity that regulates Kae1 function. The sequence is that of Probable bifunctional tRNA threonylcarbamoyladenosine biosynthesis protein from Haloquadratum walsbyi (strain DSM 16790 / HBSQ001).